The chain runs to 356 residues: tRNA N6-adenosine threonylcarbamoyltransferase (356 aa).

Fe cation contacts are provided by His115 and His119. Substrate contacts are provided by residues 139–143 (LVSGG), Asp173, Gly186, Asp190, and Asn291. Asp319 is a binding site for Fe cation.

This sequence belongs to the KAE1 / TsaD family. Fe(2+) is required as a cofactor.

Its subcellular location is the cytoplasm. The enzyme catalyses L-threonylcarbamoyladenylate + adenosine(37) in tRNA = N(6)-L-threonylcarbamoyladenosine(37) in tRNA + AMP + H(+). Required for the formation of a threonylcarbamoyl group on adenosine at position 37 (t(6)A37) in tRNAs that read codons beginning with adenine. Is involved in the transfer of the threonylcarbamoyl moiety of threonylcarbamoyl-AMP (TC-AMP) to the N6 group of A37, together with TsaE and TsaB. TsaD likely plays a direct catalytic role in this reaction. The polypeptide is tRNA N6-adenosine threonylcarbamoyltransferase (Arthrobacter sp. (strain FB24)).